The sequence spans 555 residues: Sesquiterpene synthase 31 (555 aa).

Mg(2+)-binding residues include aspartate 308, aspartate 312, aspartate 451, threonine 455, and glutamate 459. Positions 308–312 match the DDXXD motif motif; the sequence is DDTFD.

Belongs to the terpene synthase family. Tpsa subfamily. Requires Mg(2+) as cofactor. The cofactor is Mn(2+). As to expression, expressed in stem and leaf trichomes. Detected in roots, fruits and flowers.

The protein localises to the cytoplasm. The catalysed reaction is (2E,6E)-farnesyl diphosphate = viridiflorene + diphosphate. It participates in secondary metabolite biosynthesis; terpenoid biosynthesis. Functionally, sesquiterpene synthase involved in the production of viridiflorene from (E,E)-farnesyl diphosphate (FPP). Has no activity with (Z,Z)-FPP. Can act with a low efficiency as a monoterpene synthase with geranyl diphosphate as substrate. The chain is Sesquiterpene synthase 31 from Solanum lycopersicum (Tomato).